A 168-amino-acid chain; its full sequence is Fusion protein P6 (168 aa).

Transmembrane regions (helical) follow at residues 29-49 (IWPL…AGFF), 52-72 (AGFT…TPTL), 94-114 (FQSL…ALIA), and 143-163 (ALPG…LWPS).

Interacts with P3.

It localises to the virion membrane. Functionally, mediates the fusion with the host outer membrane during virus entry into the host cell. The sequence is that of Fusion protein P6 (P6) from Pseudomonas savastanoi pv. phaseolicola (Pseudomonas syringae pv. phaseolicola).